The sequence spans 282 residues: Shikimate kinase (282 aa).

ATP is bound at residue 86–96 (PIKSGLSSSSA).

Belongs to the GHMP kinase family. Archaeal shikimate kinase subfamily.

The protein resides in the cytoplasm. The enzyme catalyses shikimate + ATP = 3-phosphoshikimate + ADP + H(+). It participates in metabolic intermediate biosynthesis; chorismate biosynthesis; chorismate from D-erythrose 4-phosphate and phosphoenolpyruvate: step 5/7. This is Shikimate kinase (aroK) from Methanocaldococcus jannaschii (strain ATCC 43067 / DSM 2661 / JAL-1 / JCM 10045 / NBRC 100440) (Methanococcus jannaschii).